The sequence spans 290 residues: Glycine--tRNA ligase alpha subunit (290 aa).

The protein belongs to the class-II aminoacyl-tRNA synthetase family. In terms of assembly, tetramer of two alpha and two beta subunits.

Its subcellular location is the cytoplasm. It carries out the reaction tRNA(Gly) + glycine + ATP = glycyl-tRNA(Gly) + AMP + diphosphate. The chain is Glycine--tRNA ligase alpha subunit from Syntrophobacter fumaroxidans (strain DSM 10017 / MPOB).